A 710-amino-acid chain; its full sequence is Bifunctional sesterterpene synthase (710 aa).

A stellata-2,6,19-trien synthase region spans residues 1-327; sequence MEFKFSAVVD…RYYTDASFSE (327 aa). Positions 92 and 96 each coordinate Mg(2+). Residues D92, D96, 181–184, and 229–233 contribute to the substrate site; these read RVHD and SWDKE. The short motif at 92–96 is the DDXXD motif 1 element; sequence DDVTD. Residues 278–286 carry the NSE motif motif; the sequence is YLRVFEEVK. 318–319 is a substrate binding site; sequence RY. The segment at 328 to 709 is geranylgeranyl diphosphate synthase; it reads RQLEWMKNGI…LRLIFELLRN (382 aa). The interval 365–404 is disordered; the sequence is HHAVTSNGTGTGSHDTLNGDGTAHENNSRDASIPGRTTNG. A compositionally biased stretch (polar residues) spans 368 to 380; sequence VTSNGTGTGSHDT. Residues K430, R433, and H462 each coordinate isopentenyl diphosphate. Residues D469 and D473 each contribute to the Mg(2+) site. The DDXXD motif 2 motif lies at 469–473; that stretch reads DDLED. R478 contributes to the dimethylallyl diphosphate binding site. R479 contributes to the isopentenyl diphosphate binding site. The dimethylallyl diphosphate site is built by K556, T557, Q592, N599, K609, and K619.

In the C-terminal section; belongs to the FPP/GGPP synthase family. The protein in the N-terminal section; belongs to the terpene synthase family. As to quaternary structure, hexamer.

The enzyme catalyses 4 isopentenyl diphosphate + dimethylallyl diphosphate = (2E,6E,10E,14E)-geranylfarnesyl diphosphate + 4 diphosphate. It catalyses the reaction (2E,6E,10E,14E)-geranylfarnesyl diphosphate = variecoladiene + diphosphate. It participates in secondary metabolite biosynthesis; terpenoid biosynthesis. Its function is as follows. Multifunctional sesterterpene synthase; part of the gene cluster that mediates the biosynthesis of the sesterterpene variecolin. The first step in the pathway is performed by the variecoladiene synthase vrcA that possesses both prenyl transferase and terpene cyclase activity, converting isopentenyl diphosphate and dimethylallyl diphosphate into geranylfarnesyl pyrophosphate (GFPP) and then converting GFPP into the tetracyclic variecoladiene. The cytochrome P450 monooxygenase vrcB then catalyzes multiple oxidations at C-5 and C-20 positions to yield variecolin. The polypeptide is Bifunctional sesterterpene synthase (Aspergillus aculeatus (strain ATCC 16872 / CBS 172.66 / WB 5094)).